Reading from the N-terminus, the 404-residue chain is Probable tRNA sulfurtransferase (404 aa).

Residues Gln-60 to Glu-165 form the THUMP domain. ATP contacts are provided by residues Met-183–Leu-184, His-208–Phe-209, Arg-265, Gly-287, and Gln-296.

The protein belongs to the ThiI family.

The protein resides in the cytoplasm. It carries out the reaction [ThiI sulfur-carrier protein]-S-sulfanyl-L-cysteine + a uridine in tRNA + 2 reduced [2Fe-2S]-[ferredoxin] + ATP + H(+) = [ThiI sulfur-carrier protein]-L-cysteine + a 4-thiouridine in tRNA + 2 oxidized [2Fe-2S]-[ferredoxin] + AMP + diphosphate. The enzyme catalyses [ThiS sulfur-carrier protein]-C-terminal Gly-Gly-AMP + S-sulfanyl-L-cysteinyl-[cysteine desulfurase] + AH2 = [ThiS sulfur-carrier protein]-C-terminal-Gly-aminoethanethioate + L-cysteinyl-[cysteine desulfurase] + A + AMP + 2 H(+). It functions in the pathway cofactor biosynthesis; thiamine diphosphate biosynthesis. Its function is as follows. Catalyzes the ATP-dependent transfer of a sulfur to tRNA to produce 4-thiouridine in position 8 of tRNAs, which functions as a near-UV photosensor. Also catalyzes the transfer of sulfur to the sulfur carrier protein ThiS, forming ThiS-thiocarboxylate. This is a step in the synthesis of thiazole, in the thiamine biosynthesis pathway. The sulfur is donated as persulfide by IscS. This is Probable tRNA sulfurtransferase from Streptococcus pyogenes serotype M1.